Consider the following 513-residue polypeptide: GMP synthase [glutamine-hydrolyzing] (513 aa).

The region spanning 9–198 (MILVLDFGSQ…VRRICDCTGE (190 aa)) is the Glutamine amidotransferase type-1 domain. Cysteine 86 serves as the catalytic Nucleophile. Catalysis depends on residues histidine 172 and glutamate 174. Positions 199–388 (WTMENFIDLE…LGIPEHLVWR (190 aa)) constitute a GMPS ATP-PPase domain. 226-232 (SGGVDSS) lines the ATP pocket.

In terms of assembly, homodimer.

It carries out the reaction XMP + L-glutamine + ATP + H2O = GMP + L-glutamate + AMP + diphosphate + 2 H(+). It functions in the pathway purine metabolism; GMP biosynthesis; GMP from XMP (L-Gln route): step 1/1. Catalyzes the synthesis of GMP from XMP. The polypeptide is GMP synthase [glutamine-hydrolyzing] (Staphylococcus carnosus (strain TM300)).